The sequence spans 31 residues: Cytochrome b6-f complex subunit 6 (31 aa).

The helical transmembrane segment at 3 to 23 (ILINYFLLVGFCFALASGLFL) threads the bilayer.

This sequence belongs to the PetL family. As to quaternary structure, the 4 large subunits of the cytochrome b6-f complex are cytochrome b6, subunit IV (17 kDa polypeptide, PetD), cytochrome f and the Rieske protein, while the 4 small subunits are PetG, PetL, PetM and PetN. The complex functions as a dimer.

Its subcellular location is the plastid. It is found in the chloroplast thylakoid membrane. In terms of biological role, component of the cytochrome b6-f complex, which mediates electron transfer between photosystem II (PSII) and photosystem I (PSI), cyclic electron flow around PSI, and state transitions. PetL is important for photoautotrophic growth as well as for electron transfer efficiency and stability of the cytochrome b6-f complex. This is Cytochrome b6-f complex subunit 6 from Thalassiosira pseudonana (Marine diatom).